The primary structure comprises 310 residues: Ribosomal RNA small subunit methyltransferase H (310 aa).

Residues 33–35, Asp-53, Phe-79, Asp-100, and Gln-107 contribute to the S-adenosyl-L-methionine site; that span reads AGH.

It belongs to the methyltransferase superfamily. RsmH family.

The protein resides in the cytoplasm. It catalyses the reaction cytidine(1402) in 16S rRNA + S-adenosyl-L-methionine = N(4)-methylcytidine(1402) in 16S rRNA + S-adenosyl-L-homocysteine + H(+). In terms of biological role, specifically methylates the N4 position of cytidine in position 1402 (C1402) of 16S rRNA. The polypeptide is Ribosomal RNA small subunit methyltransferase H (Clostridium perfringens (strain 13 / Type A)).